A 318-amino-acid chain; its full sequence is MTLSSDSRLRFPLEEVGAQLLAYWQLTKPRIILLLLITTAAGMGLAAQGPLDPRLAIATLIGGGLAAAAANTLNCLYDRDIDAIMERTRWRPLPSGRIQPFEAWAFALSLAALSFILLDWQANQLAAGLALAGIVFYVVIYTHGLKRHSSQNIVIGGAAGAIPPLVGWAAVTGELAWPAWILFAIVCLWTPPHFWALALMIRDDYAAVKVPMLPVVVGNAATAQQILAYAGLLLPTTLALAWPLGAAGPFYSATALLLGLELLRRSRQLCQAPDSRPLARSLFKFSIFYLMLLCGAIAMDCLPGAPSLSQAIAAWPGF.

A run of 9 helical transmembrane segments spans residues 31–51, 55–75, 98–118, 125–145, 153–173, 181–201, 206–228, 238–260, and 285–305; these read IILLLLITTAAGMGLAAQGPL, LAIATLIGGGLAAAAANTLNC, IQPFEAWAFALSLAALSFILL, LAAGLALAGIVFYVVIYTHGL, IVIGGAAGAIPPLVGWAAVTG, ILFAIVCLWTPPHFWALALMI, AAVKVPMLPVVVGNAATAQQILA, LALAWPLGAAGPFYSATALLLGL, and FSIFYLMLLCGAIAMDCLPGA.

This sequence belongs to the UbiA prenyltransferase family. Protoheme IX farnesyltransferase subfamily.

It localises to the cell inner membrane. It catalyses the reaction heme b + (2E,6E)-farnesyl diphosphate + H2O = Fe(II)-heme o + diphosphate. Its pathway is porphyrin-containing compound metabolism; heme O biosynthesis; heme O from protoheme: step 1/1. In terms of biological role, converts heme B (protoheme IX) to heme O by substitution of the vinyl group on carbon 2 of heme B porphyrin ring with a hydroxyethyl farnesyl side group. This is Protoheme IX farnesyltransferase from Synechococcus elongatus (strain ATCC 33912 / PCC 7942 / FACHB-805) (Anacystis nidulans R2).